Reading from the N-terminus, the 194-residue chain is Imidazoleglycerol-phosphate dehydratase (194 aa).

Belongs to the imidazoleglycerol-phosphate dehydratase family.

The protein resides in the cytoplasm. The catalysed reaction is D-erythro-1-(imidazol-4-yl)glycerol 3-phosphate = 3-(imidazol-4-yl)-2-oxopropyl phosphate + H2O. It functions in the pathway amino-acid biosynthesis; L-histidine biosynthesis; L-histidine from 5-phospho-alpha-D-ribose 1-diphosphate: step 6/9. In Chlorobaculum parvum (strain DSM 263 / NCIMB 8327) (Chlorobium vibrioforme subsp. thiosulfatophilum), this protein is Imidazoleglycerol-phosphate dehydratase.